A 732-amino-acid polypeptide reads, in one-letter code: Subtilisin-like protease SBT4.13 (732 aa).

The N-terminal stretch at 1–24 (MATLAASSSLLSCLLVLFLSSVSA) is a signal peptide. Positions 25–109 (VTDDKQVYIV…VFPNKKLQLQ (85 aa)) are cleaved as a propeptide — activation peptide. One can recognise an Inhibitor I9 domain in the interval 31-108 (VYIVYMGSLS…SVFPNKKLQL (78 aa)). The 467-residue stretch at 113–579 (SWDFMGLKEG…SGHVDPIAAS (467 aa)) folds into the Peptidase S8 domain. Catalysis depends on Asp141, which acts as the Charge relay system. Asn172 carries an N-linked (GlcNAc...) asparagine glycan. His196 functions as the Charge relay system in the catalytic mechanism. Asn219 carries N-linked (GlcNAc...) asparagine glycosylation. The PA domain occupies 352–436 (DYPLVYGKSA…GLLTEDFESL (85 aa)). An N-linked (GlcNAc...) asparagine glycan is attached at Asn458. The active-site Charge relay system is Ser518. Residues Asn555, Asn600, Asn648, and Asn658 are each glycosylated (N-linked (GlcNAc...) asparagine).

The protein belongs to the peptidase S8 family. In terms of processing, the C-terminal propeptide is autocleaved.

The protein localises to the secreted. The sequence is that of Subtilisin-like protease SBT4.13 from Arabidopsis thaliana (Mouse-ear cress).